A 671-amino-acid chain; its full sequence is UvrABC system protein B (671 aa).

Residues 31-189 form the Helicase ATP-binding domain; it reads KGFEEGKKEQ…QLVDIQFDRN (159 aa). 44 to 51 serves as a coordination point for ATP; it reads GATGTGKT. A Beta-hairpin motif is present at residues 97-120; that stretch reads YYDYYQPEAYVPSTDTYIEKDSAI. Residues 437–599 form the Helicase C-terminal domain; that stretch reads QIDDLVGEIN…ITPKTIIKPI (163 aa). Residues 634-669 enclose the UVR domain; sequence KELVANLRSQMQAAAKKLDFEQAASLRDTILELQAD.

The protein belongs to the UvrB family. As to quaternary structure, forms a heterotetramer with UvrA during the search for lesions. Interacts with UvrC in an incision complex.

It is found in the cytoplasm. Its function is as follows. The UvrABC repair system catalyzes the recognition and processing of DNA lesions. A damage recognition complex composed of 2 UvrA and 2 UvrB subunits scans DNA for abnormalities. Upon binding of the UvrA(2)B(2) complex to a putative damaged site, the DNA wraps around one UvrB monomer. DNA wrap is dependent on ATP binding by UvrB and probably causes local melting of the DNA helix, facilitating insertion of UvrB beta-hairpin between the DNA strands. Then UvrB probes one DNA strand for the presence of a lesion. If a lesion is found the UvrA subunits dissociate and the UvrB-DNA preincision complex is formed. This complex is subsequently bound by UvrC and the second UvrB is released. If no lesion is found, the DNA wraps around the other UvrB subunit that will check the other stand for damage. This chain is UvrABC system protein B, found in Lacticaseibacillus casei (strain BL23) (Lactobacillus casei).